We begin with the raw amino-acid sequence, 453 residues long: Glutamyl-tRNA(Gln) amidotransferase subunit A (453 aa).

Active-site charge relay system residues include lysine 56 and serine 131. Residue serine 155 is the Acyl-ester intermediate of the active site.

It belongs to the amidase family. GatA subfamily. In terms of assembly, heterotrimer of A, B and C subunits.

It catalyses the reaction L-glutamyl-tRNA(Gln) + L-glutamine + ATP + H2O = L-glutaminyl-tRNA(Gln) + L-glutamate + ADP + phosphate + H(+). Functionally, allows the formation of correctly charged Gln-tRNA(Gln) through the transamidation of misacylated Glu-tRNA(Gln) in organisms which lack glutaminyl-tRNA synthetase. The reaction takes place in the presence of glutamine and ATP through an activated gamma-phospho-Glu-tRNA(Gln). The chain is Glutamyl-tRNA(Gln) amidotransferase subunit A from Campylobacter jejuni (strain RM1221).